Reading from the N-terminus, the 325-residue chain is MNSSFHLHFLDLGLNTTDGNLSGLSVQNASSLCEDMGIAVEVFLALGLISLLENILVIGAIVRNRNLHTPMYFFVGSLAVADMLVSLSNSWETITIYLLTNKHLVMADASVRHLDNVFDSMICISVVASMCSLLAIAVDRYVTIFCALRYQRIMTGRRSGAIIGGIWAFCASCGTVFIVYYESTYVVICLIAMFLTMLLLMASLYTHMFLLARTHIRRIATLPGHSSVRQRTGVKGAITLAMLLGVFIVCWAPFFLHLILMISCPHNLYCSCFMSHFNMYLILIMCNSVIDPLIYAFRSQEMRKTFKEIVCFQSFRTPCRFPSRY.

At 1 to 37 (MNSSFHLHFLDLGLNTTDGNLSGLSVQNASSLCEDMG) the chain is on the extracellular side. N-linked (GlcNAc...) asparagine glycans are attached at residues Asn-2, Asn-15, Asn-20, and Asn-28. The helical transmembrane segment at 38-61 (IAVEVFLALGLISLLENILVIGAI) threads the bilayer. The Cytoplasmic portion of the chain corresponds to 62–73 (VRNRNLHTPMYF). Residues 74-97 (FVGSLAVADMLVSLSNSWETITIY) traverse the membrane as a helical segment. Topologically, residues 98–114 (LLTNKHLVMADASVRHL) are extracellular. Residues 115–138 (DNVFDSMICISVVASMCSLLAIAV) traverse the membrane as a helical segment. Residues 139 to 155 (DRYVTIFCALRYQRIMT) are Cytoplasmic-facing. The chain crosses the membrane as a helical span at residues 156-179 (GRRSGAIIGGIWAFCASCGTVFIV). Residues 180–186 (YYESTYV) are Extracellular-facing. The helical transmembrane segment at 187–211 (VICLIAMFLTMLLLMASLYTHMFLL) threads the bilayer. At 212 to 239 (ARTHIRRIATLPGHSSVRQRTGVKGAIT) the chain is on the cytoplasmic side. A helical membrane pass occupies residues 240–265 (LAMLLGVFIVCWAPFFLHLILMISCP). Topologically, residues 266 to 273 (HNLYCSCF) are extracellular. A helical membrane pass occupies residues 274–297 (MSHFNMYLILIMCNSVIDPLIYAF). Over 298–325 (RSQEMRKTFKEIVCFQSFRTPCRFPSRY) the chain is Cytoplasmic. Cys-311 carries S-palmitoyl cysteine lipidation.

Belongs to the G-protein coupled receptor 1 family.

The protein localises to the cell membrane. Its function is as follows. Receptor for MSH (alpha, beta and gamma) and ACTH. The activity of this receptor is mediated by G proteins which activate adenylate cyclase. This receptor is a possible mediator of the immunomodulation properties of melanocortins. This is Melanocortin receptor 5 (MC5R) from Bos taurus (Bovine).